Reading from the N-terminus, the 364-residue chain is Histidinol-phosphate aminotransferase (364 aa).

An N6-(pyridoxal phosphate)lysine modification is found at Lys226.

The protein belongs to the class-II pyridoxal-phosphate-dependent aminotransferase family. Histidinol-phosphate aminotransferase subfamily. Homodimer. Pyridoxal 5'-phosphate serves as cofactor.

It carries out the reaction L-histidinol phosphate + 2-oxoglutarate = 3-(imidazol-4-yl)-2-oxopropyl phosphate + L-glutamate. The protein operates within amino-acid biosynthesis; L-histidine biosynthesis; L-histidine from 5-phospho-alpha-D-ribose 1-diphosphate: step 7/9. This Campylobacter jejuni subsp. jejuni serotype O:23/36 (strain 81-176) protein is Histidinol-phosphate aminotransferase.